The primary structure comprises 155 residues: MAEGETTTFTALTEKFNLPLGNYKKPKLLYCSNGGYFLRILPDGTVDGTKDRSDQHIQLQLCAESIGEVYIKSTETGQFLAMDTDGLLYGSQTPNEECLFLERLEENHYNTYISKKHAEKHWFVGLKKNGRSKLGPRTHFGQKAILFLPLPVSSD.

An N-acetylalanine modification is found at Ala2. The Nuclear localization signal signature appears at 24–27 (KKPK). Heparin contacts are provided by residues 24 to 28 (KKPKL) and 113 to 116 (ISKK).

The protein belongs to the heparin-binding growth factors family. As to quaternary structure, monomer. Homodimer. Interacts with FGFR1, FGFR2, FGFR3 and FGFR4. Affinity between fibroblast growth factors (FGFs) and their receptors is increased by heparan sulfate glycosaminoglycans that function as coreceptors. Found in a complex with FGFBP1, FGF1 and FGF2. Interacts with FGFBP1. Part of a Cu(2+)-dependent multiprotein aggregate containing FGF1, S100A13 and SYT1. Interacts with S100A13. Interacts with FGFBP1. Interacts with LRRC59. Interacts with CSNKA, CSNKB and FIBP. While binding with LRRC59, CSNKA and FIBP seem mutually exclusive, CSNKB and FIBP may cooperatively interact with FGF1. Interacts with SYT1. Forms a ternary complex with FGFR1 and ITGAV:ITGB3 and induces the recruitment of PTPN11 to the complex. Post-translationally, in the nucleus, phosphorylated by PKC/PRKCD.

The protein localises to the secreted. It localises to the cytoplasm. The protein resides in the cell cortex. It is found in the cytosol. Its subcellular location is the nucleus. In terms of biological role, plays an important role in the regulation of cell survival, cell division, angiogenesis, cell differentiation and cell migration. Functions as a potent mitogen in vitro. Acts as a ligand for FGFR1 and integrins. Binds to FGFR1 in the presence of heparin leading to FGFR1 dimerization and activation via sequential autophosphorylation on tyrosine residues which act as docking sites for interacting proteins, leading to the activation of several signaling cascades. Binds to integrin ITGAV:ITGB3. Its binding to integrin, subsequent ternary complex formation with integrin and FGFR1, and the recruitment of PTPN11 to the complex are essential for FGF1 signaling. Induces the phosphorylation and activation of FGFR1, FRS2, MAPK3/ERK1, MAPK1/ERK2 and AKT1. Can induce angiogenesis. The chain is Fibroblast growth factor 1 (FGF1) from Bos taurus (Bovine).